The chain runs to 277 residues: Inositol monophosphatase 1 (277 aa).

Positions 70, 90, 92, and 93 each coordinate Mg(2+). Glutamate 70 serves as a coordination point for substrate. Substrate contacts are provided by residues 92–95 (IDGT), 194–196 (GTA), glutamate 213, and aspartate 220. Aspartate 220 lines the Mg(2+) pocket.

Belongs to the inositol monophosphatase superfamily. Homodimer. Mg(2+) is required as a cofactor. In terms of tissue distribution, ubiquitous.

It localises to the cytoplasm. It carries out the reaction a myo-inositol phosphate + H2O = myo-inositol + phosphate. The catalysed reaction is 1D-myo-inositol 1-phosphate + H2O = myo-inositol + phosphate. The enzyme catalyses 1D-myo-inositol 2-phosphate + H2O = myo-inositol + phosphate. It catalyses the reaction 1D-myo-inositol 3-phosphate + H2O = myo-inositol + phosphate. It carries out the reaction 1D-myo-inositol 4-phosphate + H2O = myo-inositol + phosphate. The catalysed reaction is 1D-myo-inositol 5-phosphate + H2O = myo-inositol + phosphate. The enzyme catalyses 1D-myo-inositol 6-phosphate + H2O = myo-inositol + phosphate. It catalyses the reaction scyllo-inositol 1-phosphate + H2O = scyllo-inositol + phosphate. It carries out the reaction alpha-D-galactose 1-phosphate + H2O = D-galactose + phosphate. The catalysed reaction is alpha-D-glucose 1-phosphate + H2O = D-glucose + phosphate. The enzyme catalyses D-glucose 6-phosphate + H2O = D-glucose + phosphate. It catalyses the reaction beta-D-fructose 1-phosphate + H2O = D-fructose + phosphate. It carries out the reaction glycerol 2-phosphate + H2O = glycerol + phosphate. The catalysed reaction is adenosine 2'-phosphate + H2O = adenosine + phosphate. It functions in the pathway polyol metabolism; myo-inositol biosynthesis; myo-inositol from D-glucose 6-phosphate: step 2/2. Activity with myo-inositol monophosphate and D-galactose 1-phosphate is inhibited by Li(+), Ca(2+) and Mn(2+), but also by Mg(2+) at concentrations above 3 mM. Functionally, phosphatase involved in the dephosphorylation of myo-inositol monophosphate to generate myo-inositol. Is also able to dephosphorylate scyllo-inositol-phosphate, myo-inositol 1,4-diphosphate, scyllo-inositol-1,3-diphosphate and scyllo-inositol-1,4-diphosphate. Also dephosphorylates in vitro other sugar-phosphates including D-galactose-1-phosphate, glucose-1-phosphate, glucose-6-phosphate, fructose-1-phosphate, beta-glycerophosphate and 2'-AMP. Responsible for the provision of inositol required for synthesis of phosphatidylinositol and polyphosphoinositides, and involved in maintaining normal brain function. Has been implicated as the pharmacological target for lithium Li(+) action in brain. Is equally active with myo-inositol monophosphate and D-galactose 1-phosphate. This chain is Inositol monophosphatase 1 (Impa1), found in Rattus norvegicus (Rat).